The primary structure comprises 1608 residues: Protein REDUCED CHLOROPLAST COVERAGE 3 (1608 aa).

Residues 1-12 are compositionally biased toward basic residues; that stretch reads MAPRSSKGKSNN. Disordered stretches follow at residues 1 to 22 and 278 to 303; these read MAPR…KKKR and VSES…GRNG. Residues 288 to 564 form the Clu domain; that stretch reads EDEHWGGNGG…KKETDVCGKP (277 aa). TPR repeat units lie at residues 848–881, 890–923, 932–965, and 974–1007; these read GRTL…MIAV, ACAY…NERE, MKSY…LHFT, and AATY…NKRL. Disordered stretches follow at residues 1194 to 1226, 1238 to 1292, 1369 to 1400, 1466 to 1499, and 1531 to 1552; these read VEES…RQPD, HNRN…ASGA, KQES…KTSD, TPRS…VSVD, and PAAL…KDSA. The short motif at 1217-1224 is the Nuclear localization signal element; that stretch reads GRKSRQRQ. 2 stretches are compositionally biased toward polar residues: residues 1242–1265 and 1373–1385; these read QDVQ…LSKS and QESA…LTSE. A compositionally biased stretch (polar residues) spans 1535 to 1546; that stretch reads SKTSPEAESGGT.

The protein resides in the nucleus. It localises to the cytoplasm. It is found in the cytosol. May act as the scaffold of a protein complex, which sequesters key factors that are required for the G2 to M transition in meristematic tissues. Together with REC2, REC3 and FMT/CLU, contributes to the establishment of the cellular volume devoted to the chloroplast compartment. The chain is Protein REDUCED CHLOROPLAST COVERAGE 3 from Arabidopsis thaliana (Mouse-ear cress).